A 197-amino-acid chain; its full sequence is Casparian strip membrane protein 4 (197 aa).

Topologically, residues 1–34 are cytoplasmic; sequence MMSSTTIDVPAESSNVAKGKAVLVAAPRPGGWKK. A helical membrane pass occupies residues 35 to 55; sequence GIAIVDFVLRLGAVAAALGAA. Residues 56 to 85 are Extracellular-facing; the sequence is TTMATADQTLPFFTQFFQFEASYDSFTTFQ. The helical transmembrane segment at 86–106 threads the bilayer; that stretch reads FFVITMALVGCYLVLSLPLSI. Residues 107–118 are Cytoplasmic-facing; sequence VSIIRPHALGPK. A helical membrane pass occupies residues 119-139; the sequence is LFLIILDTVFLTLATASAASA. Topologically, residues 140 to 171 are extracellular; that stretch reads AAVVYVAHNGNQDSNWLAICNQFGDFCAQTSG. Residues 172-192 form a helical membrane-spanning segment; that stretch reads AVVSSLVAVVVFVLLIVMSAL. Over 193–197 the chain is Cytoplasmic; the sequence is ALGKH.

It belongs to the Casparian strip membrane proteins (CASP) family. As to quaternary structure, homodimer and heterodimers.

It localises to the cell membrane. Regulates membrane-cell wall junctions and localized cell wall deposition. Required for establishment of the Casparian strip membrane domain (CSD) and the subsequent formation of Casparian strips, a cell wall modification of the root endodermis that determines an apoplastic barrier between the intraorganismal apoplasm and the extraorganismal apoplasm and prevents lateral diffusion. In Lotus japonicus (Lotus corniculatus var. japonicus), this protein is Casparian strip membrane protein 4.